The primary structure comprises 486 residues: MFPKETTWNISFAGCGFLGVYHIGVASCLREHAPFLVANATHIYGASAGALTATALVTGACLGEAGANIIEVSKEARKRFLGPLHPSFNMVKTIRGCLLKILPADCYECASGRLGISLTRVSDGENVIITHFNSKEELIQANVCSTFIPVYCGLIPPSLQGVRYVDGGISDNLPLYELKNTITVSPFSGESDICPQDSSTNIHELRVTNTSIQFNLRNLYRLSKALFPPEPLVLREMCKQGYRDGLRFLRRNGLLNRPNPLLALPPSQPPAPEDADAQEGAVAMERTGGKDHLPPPREDHILEHLPSRLNEALLEACMEPTDLLTTLSNMLPVRLAMAMMVPYTLPLESAVSFTIRLLEWLPDVPEDIRWMKEQTGSICQYLMIRAKRKLGNHLPSRLSGQVVLRRARSLPSVPLSCAAYSEVLPSWMRNSLSLGDVLAKWEECQRQLLLGLFCTNVAFPPDALRMRVPAGPAPEPPQHPPSSPPC.

Topologically, residues 1 to 8 (MFPKETTW) are cytoplasmic. Residues 9–29 (NISFAGCGFLGVYHIGVASCL) form a helical membrane-spanning segment. A PNPLA domain is found at 10-179 (ISFAGCGFLG…SDNLPLYELK (170 aa)). The GXGXXG motif lies at 14 to 19 (GCGFLG). Topologically, residues 30–42 (REHAPFLVANATH) are extracellular. Asparagine 39 carries an N-linked (GlcNAc...) asparagine glycan. The helical transmembrane segment at 43-63 (IYGASAGALTATALVTGACLG) threads the bilayer. The GXSXG motif lies at 45-49 (GASAG). The active-site Nucleophile is the serine 47. Topologically, residues 64-137 (EAGANIIEVS…IITHFNSKEE (74 aa)) are cytoplasmic. Residue lysine 92 forms a Glycyl lysine isopeptide (Lys-Gly) (interchain with G-Cter in ubiquitin) linkage. The chain crosses the membrane as a helical span at residues 138 to 158 (LIQANVCSTFIPVYCGLIPPS). The Extracellular segment spans residues 159 to 334 (LQGVRYVDGG…TTLSNMLPVR (176 aa)). The active-site Proton acceptor is aspartate 166. The DGA/G motif lies at 166-168 (DGG). Residues 335-355 (LAMAMMVPYTLPLESAVSFTI) traverse the membrane as a helical segment. Over 356–486 (RLLEWLPDVP…PQHPPSSPPC (131 aa)) the chain is Cytoplasmic. At serine 377 the chain carries Phosphoserine; in vitro. Phosphoserine; by PKA occurs at positions 399 and 409. Phosphoserine; in vitro is present on serine 433.

As to quaternary structure, interacts with ABHD5; this association stimulates PNPLA2 triglyceride hydrolase activity. Interacts with SERPINF1; this interaction stimulates the phospholipase A2 activity of PNPLA2. Despite a colocalization in lipid droplets, it probably does not interact with PLIN. Interacts with PLIN5; prevents interaction with ABHD5. Interacts with FAF2. Post-translationally, phosphorylation at Ser-409 by PKA is increased during fasting and moderate intensity exercise, and moderately increases lipolytic activity. Ubiquitinated by PEX2 in response to reactive oxygen species (ROS), leading to its degradation. Ubiquitination is stimulated by LDAH.

The protein localises to the lipid droplet. It localises to the cell membrane. Its subcellular location is the cytoplasm. It catalyses the reaction a triacylglycerol + H2O = a diacylglycerol + a fatty acid + H(+). The catalysed reaction is a triacylglycerol + H2O = a 1,2-diacylglycerol + a fatty acid + H(+). It carries out the reaction a triacylglycerol + H2O = a 1,3-diacylglycerol + a fatty acid + H(+). The enzyme catalyses a triacyl-sn-glycerol + H2O = a 1,3-diacyl-sn-glycerol + a fatty acid + H(+). It catalyses the reaction a triacyl-sn-glycerol + H2O = a 2,3-diacyl-sn-glycerol + a fatty acid + H(+). The catalysed reaction is a 1-acylglycerol + a 1,3-diacylglycerol = a triacylglycerol + glycerol. It carries out the reaction a 1-acylglycerol + a 1,2-diacylglycerol = a triacylglycerol + glycerol. The enzyme catalyses 2 a 1-acylglycerol = a 1,2-diacylglycerol + glycerol. It catalyses the reaction a triacylglycerol + all-trans-retinol = an all-trans-retinyl ester + a diacylglycerol. The catalysed reaction is 1,2-di-(9Z-octadecenoyl)-glycerol + (9Z)-octadecenoate + H(+) = 1,2,3-tri-(9Z-octadecenoyl)-glycerol + H2O. It carries out the reaction 1,2,3-tri-(9Z-octadecenoyl)-glycerol + H2O = 1,3-di-(9Z-octadecenoyl)-glycerol + (9Z)-octadecenoate + H(+). The enzyme catalyses 1-(9Z-octadecenoyl)-glycerol + 1,3-di-(9Z-octadecenoyl)-glycerol = 1,2,3-tri-(9Z-octadecenoyl)-glycerol + glycerol. It catalyses the reaction 1-(9Z-octadecenoyl)-glycerol + 1,2-di-(9Z-octadecenoyl)-glycerol = 1,2,3-tri-(9Z-octadecenoyl)-glycerol + glycerol. The catalysed reaction is 2 1-(9Z-octadecenoyl)-glycerol = 1,2-di-(9Z-octadecenoyl)-glycerol + glycerol. It carries out the reaction 1,2,3-tri-(9Z-octadecenoyl)-glycerol + all-trans-retinol = all-trans-retinyl 9Z-octadecenoate + di-(9Z)-octadecenoylglycerol. The enzyme catalyses 1,2,3-tri-(9Z)-hexadecenoylglycerol + H2O = 1,3-di-(9Z)-hexadecenoylglycerol + (9Z)-hexadecenoate + H(+). It catalyses the reaction 1,2,3-tri-(9Z,12Z)-octadecadienoylglycerol + H2O = 1,3-di-(9Z,12Z)-octadecadienoylglycerol + (9Z,12Z)-octadecadienoate + H(+). The catalysed reaction is 1,2,3-tri-(9Z,12Z,15Z)-octadecatrienoylglycerol + H2O = 1,3-di-(9Z,12Z,15Z)-octadecatrienoylglycerol + (9Z,12Z,15Z)-octadecatrienoate + H(+). It carries out the reaction 1,3-di-(9Z)-octadecenoyl-2-hexadecanoylglycerol + H2O = 1,3-di-(9Z-octadecenoyl)-glycerol + hexadecanoate + H(+). The enzyme catalyses 1,2-di-(9Z)-octadecenoyl-3-hexadecanoyl-sn-glycerol + H2O = 1-(9Z)-octadecenoyl-3-hexadecanoyl-sn-glycerol + (9Z)-octadecenoate + H(+). It catalyses the reaction 1-hexadecanoyl-2,3-di-(9Z)-octadecenoyl-sn-glycerol + H2O = 1-hexadecanoyl-3-(9Z)-octadecenoyl-sn-glycerol + (9Z)-octadecenoate + H(+). The catalysed reaction is 1,2,3-tri-(9Z-octadecenoyl)-glycerol + H2O = 2,3-di-(9Z)-octadecenoyl-sn-glycerol + (9Z)-octadecenoate + H(+). It carries out the reaction 1,2,3-tri-(9Z)-hexadecenoylglycerol + H2O = 2,3-di-(9Z)-hexadecenoyl-sn-glycerol + (9Z)-hexadecenoate + H(+). The enzyme catalyses 1,2,3-tri-(9Z,12Z)-octadecadienoylglycerol + H2O = 2,3-di-(9Z,12Z)-octadecadienoyl-sn-glycerol + (9Z,12Z)-octadecadienoate + H(+). It catalyses the reaction 1,2,3-tri-(9Z,12Z,15Z)-octadecatrienoylglycerol + H2O = 2,3-di-(9Z,12Z,15Z)-octadecatrienoyl-sn-glycerol + (9Z,12Z,15Z)-octadecatrienoate + H(+). The catalysed reaction is 1,3-di-(9Z)-octadecenoyl-2-hexadecanoylglycerol + H2O = 2-hexadecanoyl-3-(9Z)-octadecenoyl-sn-glycerol + (9Z)-octadecenoate + H(+). It carries out the reaction 1-hexadecanoyl-2,3-di-(9Z)-octadecenoyl-sn-glycerol + H2O = 2,3-di-(9Z)-octadecenoyl-sn-glycerol + hexadecanoate + H(+). The enzyme catalyses 1,2-di-(9Z)-octadecenoyl-3-hexadecanoyl-sn-glycerol + H2O = 2-(9Z-octadecenoyl)-3-hexadecanoyl-sn-glycerol + (9Z)-octadecenoate + H(+). It catalyses the reaction a 1,2-diacyl-sn-glycero-3-phosphocholine + H2O = a 1-acyl-sn-glycero-3-phosphocholine + a fatty acid + H(+). The catalysed reaction is 1,2,3-tri-(9Z-octadecenoyl)-glycerol + 9-hydroxy-octadecanoate = 9-(9Z-octadecenoyloxy)-octadecanoate + 2,3-di-(9Z)-octadecenoyl-sn-glycerol. It carries out the reaction 1-hexadecanoyl-2,3-di-(9Z)-octadecenoyl-sn-glycerol + 9-hydroxy-octadecanoate = 9-hexadecanoyloxy-octadecanoate + 2,3-di-(9Z)-octadecenoyl-sn-glycerol. The enzyme catalyses 1,2,3-tri-(10Z)-heptadecenoylglycerol + 9-hydroxy-octadecanoate = 2,3-di-(10Z-heptadecenoyl)-sn-glycerol + 9-(10Z-heptadecenoyloxy)-octadecanoate. It catalyses the reaction 1,2,3-tri-(9Z,12Z)-octadecadienoylglycerol + 9-hydroxy-octadecanoate = 2,3-di-(9Z,12Z)-octadecadienoyl-sn-glycerol + 9-(9Z,12Z-octadecadienoyloxy)-octadecanoate. The catalysed reaction is 1,2,3-tri-(9Z)-hexadecenoylglycerol + 9-hydroxy-octadecanoate = 2,3-di-(9Z)-hexadecenoyl-sn-glycerol + 9-(9Z-hexadecenoyloxy)-octadecanoate. It carries out the reaction 9-hydroxy-octadecanoate + 1,2-di-(9Z-octadecenoyl)-sn-glycerol = 9-(9Z-octadecenoyloxy)-octadecanoate + 2-(9Z-octadecenoyl)-glycerol. The enzyme catalyses 1-hexadecanoyl-2,3-di-(9Z)-octadecenoyl-sn-glycerol + 9-hydroxy-octadecanoate = 1-hexadecanoyl-3-(9Z)-octadecenoyl-sn-glycerol + 9-(9Z-octadecenoyloxy)-octadecanoate. It functions in the pathway glycerolipid metabolism; triacylglycerol degradation. Its function is as follows. Catalyzes the initial step in triglyceride hydrolysis in adipocyte and non-adipocyte lipid droplets. Exhibits a strong preference for the hydrolysis of long-chain fatty acid esters at the sn-2 position of the glycerol backbone and acts coordinately with LIPE/HLS and DGAT2 within the lipolytic cascade. Also possesses acylglycerol transacylase and phospholipase A2 activities. Transfers fatty acid from triglyceride to retinol, hydrolyzes retinylesters, and generates 1,3-diacylglycerol from triglycerides. Regulates adiposome size and may be involved in the degradation of adiposomes. Catalyzes the formation of an ester bond between hydroxy fatty acids and fatty acids derived from triglycerides or diglycerides to generate fatty acid esters of hydroxy fatty acids (FAHFAs) in adipocytes. Acts antagonistically with LDAH in regulation of cellular lipid stores. Inhibits LDAH-stimulated lipid droplet fusion. May play an important role in energy homeostasis. May play a role in the response of the organism to starvation, enhancing hydrolysis of triglycerides and providing free fatty acids to other tissues to be oxidized in situations of energy depletion. This Bos taurus (Bovine) protein is Patatin-like phospholipase domain-containing protein 2 (PNPLA2).